The following is a 110-amino-acid chain: UPF0473 protein SSP1146 (110 aa).

It belongs to the UPF0473 family.

The protein is UPF0473 protein SSP1146 of Staphylococcus saprophyticus subsp. saprophyticus (strain ATCC 15305 / DSM 20229 / NCIMB 8711 / NCTC 7292 / S-41).